A 960-amino-acid chain; its full sequence is Ran GTPase-activating protein 2 (960 aa).

LRR repeat units lie at residues 69 to 92 (HLNL…LIAE), 132 to 156 (GCRL…LYNF), 162 to 185 (LYSL…VGKA), 227 to 254 (LGTL…AFRM), and 313 to 340 (RDCL…CFNS). Positions 370 to 408 (NIDFGRRGDDELLSSDEEEEQGAEDASMEEDAFNTSRET) are disordered. A compositionally biased stretch (acidic residues) spans 380-401 (ELLSSDEEEEQGAEDASMEEDA). 4 LRR repeats span residues 475 to 498 (ASSM…VIAK), 538 to 561 (GCKI…ALKD), 568 to 595 (SFSL…LTEC), and 663 to 685 (NRNL…KALA). Positions 777 to 819 (PENVNVGDEDDDLGSLDGDQEEYNSKSSDSEDADLDDDDEDDD) are disordered. Composition is skewed to acidic residues over residues 783 to 798 (GDED…DQEE) and 806 to 819 (SEDA…EDDD).

Its subcellular location is the nucleus. GTPase system comprising ran-1, ran-2 and ran-3 is essential in nucleocytoplasmic trafficking. Ran-2 is a GTPase activator for the nuclear RAS-related regulatory protein Ran, converting it to the putatively inactive GDP-bound state. Required for correct chromosome alignment and segregation on the metaphase plate. The polypeptide is Ran GTPase-activating protein 2 (ran-2) (Caenorhabditis elegans).